Consider the following 364-residue polypeptide: Uroporphyrinogen decarboxylase (364 aa).

Residues 28–32 (RQAGR), aspartate 78, tyrosine 160, threonine 215, and histidine 333 each bind substrate.

Belongs to the uroporphyrinogen decarboxylase family. Homodimer.

The protein localises to the cytoplasm. The catalysed reaction is uroporphyrinogen III + 4 H(+) = coproporphyrinogen III + 4 CO2. It functions in the pathway porphyrin-containing compound metabolism; protoporphyrin-IX biosynthesis; coproporphyrinogen-III from 5-aminolevulinate: step 4/4. Catalyzes the decarboxylation of four acetate groups of uroporphyrinogen-III to yield coproporphyrinogen-III. This is Uroporphyrinogen decarboxylase from Burkholderia pseudomallei (strain 668).